The chain runs to 1616 residues: MFPLIGKTIIFDNFPDPSDTWEITETIGKGTYGKVFKVLNKKNGQKAAVKILDPIHDIDEEIEAEYNILKALSDHPNVVRFYGIYFKKDKVNGDKLWLVLELCSGGSVTDLVKGFLKRGERMSEPLIAYILHEALMGLQHLHNNKTIHRDVKGNNILLTTEGGVKLVDFGVSAQLTSTRHRRNTSVGTPFWMAPEVIACEQQLDTTYDARCDTWSLGITAIELGDGDPPLADLHPMRALFKIPRNPPPKLRQPELWSAEFNDFISKCLTKDYEKRPTVSELLQHKFITQIEGKDVMLQKQLTEFIGIHQCMGGTEKARRERIHTKKGNFNRPLISNLKDVDDLATLEILDENTVSEQLEKCYSRDQIYVYVGDILIALNPFQSLGLYSTKHSKLYIGSKRTASPPHIFAMADLGYQSMITYNSDQCIVISGESGAGKTENAHLLVQQLTVLGKANNRTLQEKILQVNNLVEAFGNACTIINDNSSRFGKYLEMKFTSSGAVVGAQISEYLLEKSRVIHQAIGEKNFHIFYYIYAGLAEKKKLAHYKLPENKPPRYLQNDHLRTVQDIMNNSFYKSQYELIEQCFKVIGFTMEQLGSIYSILAAILNVGNIEFSSVATEHQIDKSHISNHTALENCASLLCIRADELQEALTSHCVVTRGETIIRPNTVEKATDVRDAMAKTLYGRLFSWIVNCINSLLKHDSSPSGNGDELSIGILDIFGFENFKKNSFEQLCINIANEQIQYYYNQHVFAWEQNEYLNEDVDARVIEYEDNWPLLDMFLQKPMGLLSLLDEESRFPKATDQTLVEKFEGNLKSQYFWRPKRMELSFGIHHYAGKVLYNASGFLAKNRDTLPTDIVLLLRSSDNSVIRQLVNHPLTKTGNLPHSKTKNVINYQMRTSEKLINLAKGDTGEATRHARETTNMKTQTVASYFRYSLMDLLSKMVVGQPHFVRCIKPNSERQARKYDKEKVLLQLRYTGILETARIRRLGFSHRILFANFIKRYYLLCYKSSEEPRMSPDTCATILEKAGLDNWALGKTKVFLKYYHVEQLNLMRKEAIDKLILIQACVRAFLCSRRYQKIQEKRKESAIIIQSAARGHLVRKQRKEIVDMKNTAVTTIQTSDQEFDYKKNFENTRESFVKKQAENAISANERFISAPNNKGSVSVVKTSTFKPEEETTNAVESNNRVYQTPKKMNNVYEEEVKQEFYLVGPEVSPKQKSVKDLEENSNLRKVEKEEAMIQSYYQRYTEERNCEESKAAYLERKAISERPSYPVPWLAENETSFKKTLEPTLSQRSIYQNANSMEKEKKTSVVTQRAPICSQEEGRGRLRHETVKERQVEPVTQAQEEEDKAAVFIQSKYRGYKRRQQLRKDKMSSFKHQRIVTTPTEVARNTHNLYSYPTKHEEINNIKKKDNKDSKATSEREACGLAIFSKQISKLSEEYFILQKKLNEMILSQQLKSLYLGVSHHKPINRRVSSQQCLSGVCKGEEPKILRPPRRPRKPKTLNNPEDSTYYYLLHKSIQEEKRRPRKDSQGKLLDLEDFYYKEFLPSRSGPKEHSPSLRERRPQQELQNQCIKANERCWAAESPEKEEEREPAANPYDFRRLLRKTSQRRRLVQQS.

The Protein kinase domain occupies 21–287; sequence WEITETIGKG…VSELLQHKFI (267 aa). ATP is bound by residues 27–35 and lysine 50; that span reads IGKGTYGKV. Residue aspartate 150 is the Proton acceptor of the active site. One can recognise a Myosin motor domain in the interval 338-1053; it reads KDVDDLATLE…HVEQLNLMRK (716 aa). The tract at residues 934–956 is actin-binding; sequence LMDLLSKMVVGQPHFVRCIKPNS. 3 consecutive IQ domains span residues 1055 to 1084, 1082 to 1111, and 1346 to 1375; these read AIDK…KRKE, RKES…MKNT, and EDKA…SSFK. Residues 1401 to 1479 form an interaction with MORN4 region; that stretch reads EEINNIKKKD…RRVSSQQCLS (79 aa). Disordered regions lie at residues 1545–1567 and 1581–1616; these read LPSR…QQEL and AESP…VQQS. Basic and acidic residues-rich tracts occupy residues 1550 to 1564 and 1583 to 1592; these read GPKE…RRPQ and SPEKEEEREP. Over residues 1602–1616 the composition is skewed to basic residues; sequence LLRKTSQRRRLVQQS.

In the C-terminal section; belongs to the TRAFAC class myosin-kinesin ATPase superfamily. Myosin family. This sequence in the N-terminal section; belongs to the protein kinase superfamily. STE Ser/Thr protein kinase family. In terms of assembly, interacts with MORN4. Interacts (via C-terminus) with ESPN and ESPNL. As to expression, strongest expression in retina, retinal pigment epithelial cells, cochlea and pancreas.

It is found in the cytoplasm. Its subcellular location is the cytoskeleton. It localises to the cell projection. The protein localises to the filopodium tip. The protein resides in the stereocilium. It carries out the reaction L-seryl-[protein] + ATP = O-phospho-L-seryl-[protein] + ADP + H(+). The enzyme catalyses L-threonyl-[protein] + ATP = O-phospho-L-threonyl-[protein] + ADP + H(+). The catalysed reaction is ATP + H2O = ADP + phosphate + H(+). Functionally, actin-dependent motor protein with a protein kinase activity, playing an essential role in hearing. Probably also plays a role in vision. Required for normal cochlear hair bundle development and hearing. Plays an important role in the early steps of cochlear hair bundle morphogenesis. Influences the number and lengths of stereocilia to be produced and limits the growth of microvilli within the forming auditory hair bundles thereby contributing to the architecture of the hair bundle, including its staircase pattern. Involved in the elongation of actin in stereocilia tips by transporting the actin regulatory factor ESPN to the plus ends of actin filaments. This chain is Myosin-IIIa (MYO3A), found in Homo sapiens (Human).